The primary structure comprises 396 residues: MAKGKFERTKPHVNVGTIGHVDHGKTTLTAAITTVLSNKFGGEARGYDQIDAAPEEKARGITINTSHVEYETETRHYAHVDCPGHADYVKNMITGAAQMDGAILVVSAADGPMPQTREHILLSRQVGVPYIIVFLNKADMVDDAELLELVEMEVRELLSKYDFPGDDTPIVKGSAKLALEGDKGELGEQAILSLAQALDTYIPTPERAVDGAFLMPVEDVFSISGRGTVVTGRIERGVVKVGEEIEIVGIKPTVKTTCTGVEMFRKLLDQGQAGDNVGILLRGTKREDVERGQVLAKPGSINPHTDFTAEVYILSKEEGGRHTPFFNGYRPQFYFRTTDVTGTIDLPADKEMVLPGDNVSMTVKLLAPIAMEEGLRFAIREGGRTVGAGVVAKIIK.

The tr-type G domain occupies 10 to 206 (KPHVNVGTIG…ALDTYIPTPE (197 aa)). Positions 19-26 (GHVDHGKT) are G1. 19–26 (GHVDHGKT) provides a ligand contact to GTP. T26 contacts Mg(2+). A G2 region spans residues 60–64 (GITIN). The tract at residues 81 to 84 (DCPG) is G3. GTP contacts are provided by residues 81–85 (DCPGH) and 136–139 (NKAD). The G4 stretch occupies residues 136 to 139 (NKAD). The G5 stretch occupies residues 174–176 (SAK).

It belongs to the TRAFAC class translation factor GTPase superfamily. Classic translation factor GTPase family. EF-Tu/EF-1A subfamily. Monomer.

It localises to the cytoplasm. The enzyme catalyses GTP + H2O = GDP + phosphate + H(+). Its function is as follows. GTP hydrolase that promotes the GTP-dependent binding of aminoacyl-tRNA to the A-site of ribosomes during protein biosynthesis. This is Elongation factor Tu from Bordetella bronchiseptica (strain ATCC BAA-588 / NCTC 13252 / RB50) (Alcaligenes bronchisepticus).